Here is a 412-residue protein sequence, read N- to C-terminus: Argininosuccinate synthase (412 aa).

ATP is bound by residues 16–24 and Ala44; that span reads AYSGGLDTS. Tyr96 and Ser101 together coordinate L-citrulline. Gly126 lines the ATP pocket. L-aspartate contacts are provided by Thr128, Asn132, and Asp133. Residue Asn132 coordinates L-citrulline. 5 residues coordinate L-citrulline: Arg136, Ser185, Ser194, Glu270, and Tyr282.

The protein belongs to the argininosuccinate synthase family. Type 1 subfamily. As to quaternary structure, homotetramer.

Its subcellular location is the cytoplasm. It catalyses the reaction L-citrulline + L-aspartate + ATP = 2-(N(omega)-L-arginino)succinate + AMP + diphosphate + H(+). The protein operates within amino-acid biosynthesis; L-arginine biosynthesis; L-arginine from L-ornithine and carbamoyl phosphate: step 2/3. The sequence is that of Argininosuccinate synthase from Shewanella baltica (strain OS195).